The primary structure comprises 310 residues: Very-long-chain enoyl-CoA reductase (310 aa).

Topologically, residues 1 to 85 (MPITIKSRSK…KDLGPQISWR (85 aa)) are cytoplasmic. Residues 86–106 (LVFFCEYLGPVLVHSLFYYLS) traverse the membrane as a helical segment. The Lumenal portion of the chain corresponds to 107–141 (TIPTVVDRWHSASSDYNPFLNRVAYFLILGHYGKR). A helical transmembrane segment spans residues 142-162 (LFETLFVHQFSLATMPIFNLF). Residues 163–165 (KNC) lie on the Cytoplasmic side of the membrane. A helical membrane pass occupies residues 166–186 (FHYWVLSGLISFGYFGYGFPF). At 187 to 201 (GNAKLFKYYSYLKLD) the chain is on the lumenal side. The chain crosses the membrane as a helical span at residues 202 to 222 (DLSTLIGLFVLSELWNFYCHI). Topologically, residues 223 to 242 (KLRLWGDYQKKHGNAKIRVP) are cytoplasmic. Residues 243 to 265 (LNQGIFNLFVAPNYTFEVWSWIW) traverse the membrane as a helical segment. Topologically, residues 266–268 (FTF) are lumenal. The chain crosses the membrane as a helical span at residues 269-291 (VFKFNLFAVLFLTVSTAQMYAWA). At 292–310 (QKKNKKYHTRRAFLIPFVF) the chain is on the cytoplasmic side.

This sequence belongs to the steroid 5-alpha reductase family. Interacts with the fatty acid elongation system components ELO2 and ELO3. Interacts with NVJ1.

It localises to the endoplasmic reticulum membrane. The enzyme catalyses a very-long-chain 2,3-saturated fatty acyl-CoA + NADP(+) = a very-long-chain (2E)-enoyl-CoA + NADPH + H(+). It catalyses the reaction octadecanoyl-CoA + NADP(+) = (2E)-octadecenoyl-CoA + NADPH + H(+). It carries out the reaction (2E)-eicosenoyl-CoA + NADPH + H(+) = eicosanoyl-CoA + NADP(+). The catalysed reaction is (2E)-docosenoyl-CoA + NADPH + H(+) = docosanoyl-CoA + NADP(+). The enzyme catalyses (2E)-tetracosenoyl-CoA + NADPH + H(+) = tetracosanoyl-CoA + NADP(+). It catalyses the reaction (2E)-hexacosenoyl-CoA + NADPH + H(+) = hexacosanoyl-CoA + NADP(+). It participates in lipid metabolism; fatty acid biosynthesis. In terms of biological role, catalyzes the last of the four reactions of the long-chain fatty acids elongation cycle. This endoplasmic reticulum-bound enzymatic process, allows the addition of 2 carbons to the chain of long- and very long-chain fatty acids/VLCFAs per cycle. This enzyme reduces the trans-2,3-enoyl-CoA fatty acid intermediate to an acyl-CoA that can be further elongated by entering a new cycle of elongation. Thereby, it participates in the production of VLCFAs of different chain lengths that are involved in multiple biological processes as precursors of membrane lipids and lipid mediators. VLCFAs serve for instance as precursors for ceramide and sphingolipids. Required for normal biogenesis of piecemeal microautophagy of the nucleus (PMN) bleps and vesicles during nutrient stress. The chain is Very-long-chain enoyl-CoA reductase (TSC13) from Saccharomyces cerevisiae (strain ATCC 204508 / S288c) (Baker's yeast).